We begin with the raw amino-acid sequence, 544 residues long: WD repeat-containing protein 25 (544 aa).

2 disordered regions span residues 17–74 (DSDS…EDPG) and 183–208 (QRQA…GRAP). Residues 30-39 (FNATGQQKDT) are compositionally biased toward polar residues. 7 WD repeats span residues 244-286 (GHRG…HCLQ), 290-329 (LHTE…QLFS), 330-373 (GRSD…RSYK), 375-420 (TIQQ…KISN), 424-463 (HERF…RMSR), 469-510 (GHKV…RACT), and 513-544 (GHTQ…KIWH).

Expressed in heart, muscle, testis, ovary, uterus and prostate.

The polypeptide is WD repeat-containing protein 25 (Homo sapiens (Human)).